Consider the following 101-residue polypeptide: Urinary protein 3 (101 aa).

The first 21 residues, 1–21 (MGKHILLLPLGLSLLMSSLLA), serve as a signal peptide directing secretion. The UPAR/Ly6 domain occupies 22–99 (LQCFRCISFD…CSATPFCNMV (78 aa)). 5 disulfides stabilise this stretch: cysteine 24–cysteine 51, cysteine 27–cysteine 36, cysteine 43–cysteine 70, cysteine 73–cysteine 89, and cysteine 90–cysteine 96.

Its subcellular location is the secreted. This chain is Urinary protein 3, found in Rattus norvegicus (Rat).